Consider the following 160-residue polypeptide: Cytochrome b6-f complex subunit 4 (160 aa).

3 helical membrane-spanning segments follow: residues 36-56 (LLYL…GLAV), 95-115 (LLGV…PFIE), and 131-151 (LVFI…CLPI).

This sequence belongs to the cytochrome b family. PetD subfamily. As to quaternary structure, the 4 large subunits of the cytochrome b6-f complex are cytochrome b6, subunit IV (17 kDa polypeptide, petD), cytochrome f and the Rieske protein, while the 4 small subunits are petG, petL, petM and petN. The complex functions as a dimer.

The protein resides in the plastid. It is found in the chloroplast thylakoid membrane. Component of the cytochrome b6-f complex, which mediates electron transfer between photosystem II (PSII) and photosystem I (PSI), cyclic electron flow around PSI, and state transitions. In Thalassiosira pseudonana (Marine diatom), this protein is Cytochrome b6-f complex subunit 4.